Consider the following 867-residue polypeptide: Alanine--tRNA ligase (867 aa).

Positions 556, 560, 658, and 662 each coordinate Zn(2+).

It belongs to the class-II aminoacyl-tRNA synthetase family. Requires Zn(2+) as cofactor.

It localises to the cytoplasm. It catalyses the reaction tRNA(Ala) + L-alanine + ATP = L-alanyl-tRNA(Ala) + AMP + diphosphate. In terms of biological role, catalyzes the attachment of alanine to tRNA(Ala) in a two-step reaction: alanine is first activated by ATP to form Ala-AMP and then transferred to the acceptor end of tRNA(Ala). Also edits incorrectly charged Ser-tRNA(Ala) and Gly-tRNA(Ala) via its editing domain. The sequence is that of Alanine--tRNA ligase from Fusobacterium nucleatum subsp. nucleatum (strain ATCC 25586 / DSM 15643 / BCRC 10681 / CIP 101130 / JCM 8532 / KCTC 2640 / LMG 13131 / VPI 4355).